Consider the following 668-residue polypeptide: Fructose-1,6-bisphosphatase class 3 (668 aa).

The protein belongs to the FBPase class 3 family. Mn(2+) is required as a cofactor.

The enzyme catalyses beta-D-fructose 1,6-bisphosphate + H2O = beta-D-fructose 6-phosphate + phosphate. Its pathway is carbohydrate biosynthesis; gluconeogenesis. The chain is Fructose-1,6-bisphosphatase class 3 from Clostridium botulinum (strain Langeland / NCTC 10281 / Type F).